Consider the following 384-residue polypeptide: tRNA(Met) cytidine acetate ligase (384 aa).

Residues 7 to 20, glycine 101, asparagine 153, and arginine 178 each bind ATP; that span reads VAEY…HEFL.

The protein belongs to the TmcAL family.

It localises to the cytoplasm. The enzyme catalyses cytidine(34) in elongator tRNA(Met) + acetate + ATP = N(4)-acetylcytidine(34) in elongator tRNA(Met) + AMP + diphosphate. Catalyzes the formation of N(4)-acetylcytidine (ac(4)C) at the wobble position of elongator tRNA(Met), using acetate and ATP as substrates. First activates an acetate ion to form acetyladenylate (Ac-AMP) and then transfers the acetyl group to tRNA to form ac(4)C34. The polypeptide is tRNA(Met) cytidine acetate ligase (Lactobacillus delbrueckii subsp. bulgaricus (strain ATCC 11842 / DSM 20081 / BCRC 10696 / JCM 1002 / NBRC 13953 / NCIMB 11778 / NCTC 12712 / WDCM 00102 / Lb 14)).